The following is a 195-amino-acid chain: Group XIIB secretory phospholipase A2-like protein (195 aa).

A signal peptide spans 1 to 19 (MKLLCGFFLLWLGLVGNLA). Residues Ser-89, Tyr-91, Leu-93, and Asp-116 each coordinate Ca(2+).

This sequence belongs to the phospholipase A2 family. The cofactor is Ca(2+).

It localises to the secreted. Not known; does not seem to have catalytic activity. The sequence is that of Group XIIB secretory phospholipase A2-like protein (Pla2g12b) from Mus musculus (Mouse).